Consider the following 175-residue polypeptide: Co-chaperone protein HscB homolog (175 aa).

Residues 7–79 (SHFALFNLPE…LKRARYLLSL (73 aa)) enclose the J domain.

The protein belongs to the HscB family. In terms of assembly, interacts with HscA and stimulates its ATPase activity.

In terms of biological role, co-chaperone involved in the maturation of iron-sulfur cluster-containing proteins. Seems to help targeting proteins to be folded toward HscA. The polypeptide is Co-chaperone protein HscB homolog (Paraburkholderia phymatum (strain DSM 17167 / CIP 108236 / LMG 21445 / STM815) (Burkholderia phymatum)).